Here is a 252-residue protein sequence, read N- to C-terminus: MILQIDMGNTRLKWRVKNKLASLVEGHCLWSDAEDALMASLMPYGGLISRILVASVRSQEDNQAFMQLLGRLTPLVPEFAYSQSHNDGLVNGYADPERLGVDRWLALLAGYDRHKAYPFMLMSAGTALTLDLVDGQGHHLGGYIAPGLDVFVRAVSHSAAQINVVKSNNLFDASPGRSTVDAVHHAFAAMLSGLVQKSYELLSRNNGFAPVLLITGGDADVVKGLFHQGITCPDLVFSGLDIYFDLRAGNNG.

Residue 6–13 (DMGNTRLK) participates in ATP binding. Residues Tyr93 and 100–103 (GVDR) contribute to the substrate site. The Proton acceptor role is filled by Asp102. Thr126 contributes to the ATP binding site. Thr179 contributes to the substrate binding site.

The protein belongs to the type III pantothenate kinase family. In terms of assembly, homodimer. The cofactor is NH4(+). K(+) serves as cofactor.

It is found in the cytoplasm. The catalysed reaction is (R)-pantothenate + ATP = (R)-4'-phosphopantothenate + ADP + H(+). Its pathway is cofactor biosynthesis; coenzyme A biosynthesis; CoA from (R)-pantothenate: step 1/5. Its function is as follows. Catalyzes the phosphorylation of pantothenate (Pan), the first step in CoA biosynthesis. This chain is Type III pantothenate kinase, found in Cellvibrio japonicus (strain Ueda107) (Pseudomonas fluorescens subsp. cellulosa).